A 352-amino-acid chain; its full sequence is Alanine racemase (352 aa).

The active-site Proton acceptor; specific for D-alanine is the lysine 33. Lysine 33 is modified (N6-(pyridoxal phosphate)lysine). A substrate-binding site is contributed by arginine 129. Tyrosine 250 serves as the catalytic Proton acceptor; specific for L-alanine. Methionine 298 contributes to the substrate binding site.

This sequence belongs to the alanine racemase family. Requires pyridoxal 5'-phosphate as cofactor.

The enzyme catalyses L-alanine = D-alanine. It participates in amino-acid biosynthesis; D-alanine biosynthesis; D-alanine from L-alanine: step 1/1. Catalyzes the interconversion of L-alanine and D-alanine. May also act on other amino acids. The sequence is that of Alanine racemase (alr) from Neisseria gonorrhoeae (strain ATCC 700825 / FA 1090).